We begin with the raw amino-acid sequence, 1070 residues long: DNA-directed RNA polymerase subunit beta (1070 aa).

The protein belongs to the RNA polymerase beta chain family. In plastids the minimal PEP RNA polymerase catalytic core is composed of four subunits: alpha, beta, beta', and beta''. When a (nuclear-encoded) sigma factor is associated with the core the holoenzyme is formed, which can initiate transcription.

It localises to the plastid. The protein resides in the chloroplast. It carries out the reaction RNA(n) + a ribonucleoside 5'-triphosphate = RNA(n+1) + diphosphate. Functionally, DNA-dependent RNA polymerase catalyzes the transcription of DNA into RNA using the four ribonucleoside triphosphates as substrates. The sequence is that of DNA-directed RNA polymerase subunit beta from Morus indica (Mulberry).